Here is a 247-residue protein sequence, read N- to C-terminus: Cell division protein ZapD (247 aa).

Belongs to the ZapD family. As to quaternary structure, interacts with FtsZ.

The protein localises to the cytoplasm. Cell division factor that enhances FtsZ-ring assembly. Directly interacts with FtsZ and promotes bundling of FtsZ protofilaments, with a reduction in FtsZ GTPase activity. The chain is Cell division protein ZapD from Salmonella dublin (strain CT_02021853).